Reading from the N-terminus, the 194-residue chain is Fe/S biogenesis protein NfuA (194 aa).

[4Fe-4S] cluster-binding residues include cysteine 152 and cysteine 155.

Belongs to the NfuA family. Homodimer. It depends on [4Fe-4S] cluster as a cofactor.

Functionally, involved in iron-sulfur cluster biogenesis. Binds a 4Fe-4S cluster, can transfer this cluster to apoproteins, and thereby intervenes in the maturation of Fe/S proteins. Could also act as a scaffold/chaperone for damaged Fe/S proteins. This Ectopseudomonas mendocina (strain ymp) (Pseudomonas mendocina) protein is Fe/S biogenesis protein NfuA.